The following is a 281-amino-acid chain: Nuclear receptor-interacting protein 2 (281 aa).

The segment at 18–85 is disordered; it reads ESCSTGQRQA…RAHLSQQRRL (68 aa). Over residues 36–47 the composition is skewed to pro residues; the sequence is TPPPSSPWPTPP. Basic and acidic residues predominate over residues 55–78; it reads QEARRDEGEARTRGQEAQLRDRAH. The LXXLL motif signature appears at 244-248; it reads LQTLL.

In terms of assembly, interacts with NR1F2, RARA and THRB in a ligand-dependent manner.

The protein localises to the nucleus. Its function is as follows. Down-regulates transcriptional activation by nuclear receptors such as NR1F2. In Homo sapiens (Human), this protein is Nuclear receptor-interacting protein 2 (NRIP2).